The following is a 76-amino-acid chain: Sec-independent protein translocase protein TatA (76 aa).

The chain crosses the membrane as a helical span at residues 1–21; it reads MGSFSIWHWLVVLAIVVLVFG. The interval 41–76 is disordered; it reads EGMKGAEEESTPPPPAQQVTGHSIKSEIEEKDQTKV. Residues 64–76 are compositionally biased toward basic and acidic residues; sequence IKSEIEEKDQTKV.

It belongs to the TatA/E family. In terms of assembly, the Tat system comprises two distinct complexes: a TatABC complex, containing multiple copies of TatA, TatB and TatC subunits, and a separate TatA complex, containing only TatA subunits. Substrates initially bind to the TatABC complex, which probably triggers association of the separate TatA complex to form the active translocon.

It localises to the cell inner membrane. Functionally, part of the twin-arginine translocation (Tat) system that transports large folded proteins containing a characteristic twin-arginine motif in their signal peptide across membranes. TatA could form the protein-conducting channel of the Tat system. The polypeptide is Sec-independent protein translocase protein TatA (Nitrosomonas europaea (strain ATCC 19718 / CIP 103999 / KCTC 2705 / NBRC 14298)).